A 132-amino-acid polypeptide reads, in one-letter code: Interleukin-5 (132 aa).

The signal sequence occupies residues 1–19 (MRMLLCLNVLTLSCVWAIA). N-linked (GlcNAc...) asparagine glycosylation is found at Asn45, Asn74, and Asn88.

This sequence belongs to the IL-5 family. In terms of assembly, homodimer; disulfide-linked. Interacts with IL5RA. Interacts with CSF2RB.

It is found in the secreted. In terms of biological role, homodimeric cytokine expressed predominantly by T-lymphocytes and NK cells that plays an important role in the survival, differentiation, and chemotaxis of eosinophils. Acts also on activated and resting B-cells to induce immunoglobulin production, growth, and differentiation. Mechanistically, exerts its biological effects through a receptor composed of IL5RA subunit and the cytokine receptor common subunit beta/CSF2RB. Binding to the receptor leads to activation of various kinases including LYN, SYK and JAK2 and thereby propagates signals through the RAS-MAPK and JAK-STAT5 pathways respectively. This Rattus norvegicus (Rat) protein is Interleukin-5 (Il5).